Consider the following 236-residue polypeptide: tRNA (guanine-N(7)-)-methyltransferase (236 aa).

Asp35, Glu60, Asn87, and Asp113 together coordinate S-adenosyl-L-methionine. Residue Asp113 is part of the active site. Substrate-binding residues include Lys117 and Asp149.

This sequence belongs to the class I-like SAM-binding methyltransferase superfamily. TrmB family.

The catalysed reaction is guanosine(46) in tRNA + S-adenosyl-L-methionine = N(7)-methylguanosine(46) in tRNA + S-adenosyl-L-homocysteine. Its pathway is tRNA modification; N(7)-methylguanine-tRNA biosynthesis. Functionally, catalyzes the formation of N(7)-methylguanine at position 46 (m7G46) in tRNA. The chain is tRNA (guanine-N(7)-)-methyltransferase from Prochlorococcus marinus (strain MIT 9303).